Reading from the N-terminus, the 675-residue chain is Cytoplasmic tyrosine-protein kinase BMX (675 aa).

In terms of domain architecture, PH spans 4–111 (KSILEELLLK…WLKALQKEIR (108 aa)). Residues 113–149 (NPHLLVKYHSGFFVDGKFLCCQQSCKAAPGCTLWEAY) form a Btk-type zinc finger. Zn(2+) is bound by residues histidine 121, cysteine 132, cysteine 133, and cysteine 143. Phosphotyrosine; by autocatalysis occurs at positions 216 and 224. Residues 296–392 (WFAGNISRSQ…GMITRLRHPV (97 aa)) enclose the SH2 domain. The Protein kinase domain occupies 417–675 (ITLLKELGSG…IEPLREKDKH (259 aa)). ATP-binding positions include 423–431 (LGSGQFGVV) and lysine 445. Aspartate 536 functions as the Proton acceptor in the catalytic mechanism. At tyrosine 566 the chain carries Phosphotyrosine; by SRC and autocatalysis. The CAV1-binding signature appears at 596 to 603 (WAFGILMW).

It belongs to the protein kinase superfamily. Tyr protein kinase family. TEC subfamily. As to quaternary structure, interacts with BCAR1, CAV1, MYD88, PTK2/FAK1, RUFY1, RUFY2, STAT3, TIRAP and TNFRSF1B. Requires Zn(2+) as cofactor. Post-translationally, phosphorylated in response to protein I/II and to LPS. Phosphorylation at Tyr-566 by SRC and by autocatalysis leads to activation and is required for STAT3 phosphorylation by BMX. In terms of tissue distribution, highly expressed in cells with great migratory potential, including endothelial cells and metastatic carcinoma cell lines.

The protein resides in the cytoplasm. The enzyme catalyses L-tyrosyl-[protein] + ATP = O-phospho-L-tyrosyl-[protein] + ADP + H(+). Its activity is regulated as follows. TEK and vascular endothelial growth factor receptor 1 (FLT1) stimulate BMX tyrosine kinase activity. Activated by integrins through the mediation of PTK2/FAK1. Activated by TNF through the mediation of TNFRSF1B. Functionally, non-receptor tyrosine kinase that plays central but diverse modulatory roles in various signaling processes involved in the regulation of actin reorganization, cell migration, cell proliferation and survival, cell adhesion, and apoptosis. Participates in signal transduction stimulated by growth factor receptors, cytokine receptors, G-protein coupled receptors, antigen receptors and integrins. Induces tyrosine phosphorylation of BCAR1 in response to integrin regulation. Activation of BMX by integrins is mediated by PTK2/FAK1, a key mediator of integrin signaling events leading to the regulation of actin cytoskeleton and cell motility. Plays a critical role in TNF-induced angiogenesis, and implicated in the signaling of TEK and FLT1 receptors, 2 important receptor families essential for angiogenesis. Required for the phosphorylation and activation of STAT3, a transcription factor involved in cell differentiation. Also involved in interleukin-6 (IL6) induced differentiation. Also plays a role in programming adaptive cytoprotection against extracellular stress in different cell systems, salivary epithelial cells, brain endothelial cells, and dermal fibroblasts. May be involved in regulation of endocytosis through its interaction with an endosomal protein RUFY1. May also play a role in the growth and differentiation of hematopoietic cells; as well as in signal transduction in endocardial and arterial endothelial cells. This Homo sapiens (Human) protein is Cytoplasmic tyrosine-protein kinase BMX (BMX).